The chain runs to 360 residues: Mannose-1-phosphate guanylyltransferase catalytic subunit beta (360 aa).

Residues 2 to 222 are substrate-binding domain; sequence KALILVGGYG…QGFWMDIGQP (221 aa). Asp-110 provides a ligand contact to GDP-alpha-D-mannose. Residue Asp-110 participates in Mg(2+) binding. Lys-162 is an active-site residue. Asp-218 contributes to the GDP-alpha-D-mannose binding site. A Mg(2+)-binding site is contributed by Asp-218. The interval 245-360 is hexapeptide repeat domain; sequence HVGPGFIGNV…ESVPEPRIIM (116 aa).

This sequence belongs to the transferase hexapeptide repeat family. As to quaternary structure, component of the GMPPA-GMPPB mannose-1-phosphate guanylyltransferase complex composed of 4 gmppa subunits and 8 gmppb subunits; the complex is organized into three layers, a central layer made up of 2 gmppa dimers sandwiched between two layers each made up of 2 gmppb dimers. Catalytic activity of gmppb is reduced when part of the complex and binding of GDP-alpha-D-Mannose by gmppa induces allosteric feedback inhibition of gmppb. Mg(2+) serves as cofactor.

It catalyses the reaction alpha-D-mannose 1-phosphate + GTP + H(+) = GDP-alpha-D-mannose + diphosphate. Its pathway is nucleotide-sugar biosynthesis; GDP-alpha-D-mannose biosynthesis; GDP-alpha-D-mannose from alpha-D-mannose 1-phosphate (GTP route): step 1/1. Enzyme activity is reduced by incorporation into the GMPPA-GMPPB mannose-1-phosphate guanylyltransferase complex. Allosterically inhibited, when part of the GMPPA-GMPPB complex, by GDP-alpha-D-mannose binding to GMPPA. Its function is as follows. Catalytic subunit of the GMPPA-GMPPB mannose-1-phosphate guanylyltransferase complex. Catalyzes the formation of GDP-mannose, an essential precursor of glycan moieties of glycoproteins and glycolipids. Can catalyze the reverse reaction in vitro. Together with GMPPA regulates GDP-alpha-D-mannose levels. In Xenopus tropicalis (Western clawed frog), this protein is Mannose-1-phosphate guanylyltransferase catalytic subunit beta (gmppb).